The sequence spans 72 residues: Translation initiation factor IF-1 (72 aa).

Positions 1-72 constitute an S1-like domain; it reads MAKEESIKMN…SKGRITYRAR (72 aa).

The protein belongs to the IF-1 family. As to quaternary structure, component of the 30S ribosomal translation pre-initiation complex which assembles on the 30S ribosome in the order IF-2 and IF-3, IF-1 and N-formylmethionyl-tRNA(fMet); mRNA recruitment can occur at any time during PIC assembly.

The protein localises to the cytoplasm. In terms of biological role, one of the essential components for the initiation of protein synthesis. Stabilizes the binding of IF-2 and IF-3 on the 30S subunit to which N-formylmethionyl-tRNA(fMet) subsequently binds. Helps modulate mRNA selection, yielding the 30S pre-initiation complex (PIC). Upon addition of the 50S ribosomal subunit IF-1, IF-2 and IF-3 are released leaving the mature 70S translation initiation complex. The chain is Translation initiation factor IF-1 from Alkalilimnicola ehrlichii (strain ATCC BAA-1101 / DSM 17681 / MLHE-1).